Here is a 304-residue protein sequence, read N- to C-terminus: Thiosulfate sulfurtransferase TUM1 (304 aa).

Rhodanese domains lie at 20–137 (KVHR…PLDS) and 177–299 (LAKK…PEWI). Positions 191 to 201 (RFEGTEPEPRS) are enriched in basic and acidic residues. Residues 191-222 (RFEGTEPEPRSDIPSGHIPGTQPLPYGSLLDP) form a disordered region. The residue at position 201 (Ser201) is a Phosphoserine. Catalysis depends on Cys259, which acts as the Cysteine persulfide intermediate. Ser264 is modified (phosphoserine).

It is found in the mitochondrion. It localises to the cytoplasm. The enzyme catalyses thiosulfate + hydrogen cyanide = thiocyanate + sulfite + 2 H(+). In terms of biological role, sulfur transferase that accepts persulfite from NFS1 and transfers it to UBA4 in the pathway for 2-thiolation of the wobble uridine base of tRNAs. Stimulates sulfur transfer by NFS1. Involved in metabolism of sterol esters in a tRNA thiolation pathway-independent manner. The protein is Thiosulfate sulfurtransferase TUM1 of Saccharomyces cerevisiae (strain ATCC 204508 / S288c) (Baker's yeast).